The chain runs to 20 residues: Alpha-amylase (20 aa).

The catalysed reaction is Endohydrolysis of (1-&gt;4)-alpha-D-glucosidic linkages in polysaccharides containing three or more (1-&gt;4)-alpha-linked D-glucose units.. Its activity is regulated as follows. Strongly inhibited by Hg (2+). Inhibited by Zn (2+). Activated by Fe (2+), Mg (2+) and Ba (2+). Its function is as follows. Alpha-amylase active towards amylose, starch, amylopectin and maltodextrins. Has lower activity towards glycogen, and is not active towards alpha/beta-cyclodextrin. The chain is Alpha-amylase from Bacillus sp.